A 530-amino-acid chain; its full sequence is Bifunctional purine biosynthesis protein PurH (530 aa).

Residues 1 to 148 (MEQARPIRRA…KNHKDVAIVV (148 aa)) form the MGS-like domain.

This sequence belongs to the PurH family.

It catalyses the reaction (6R)-10-formyltetrahydrofolate + 5-amino-1-(5-phospho-beta-D-ribosyl)imidazole-4-carboxamide = 5-formamido-1-(5-phospho-D-ribosyl)imidazole-4-carboxamide + (6S)-5,6,7,8-tetrahydrofolate. It carries out the reaction IMP + H2O = 5-formamido-1-(5-phospho-D-ribosyl)imidazole-4-carboxamide. It participates in purine metabolism; IMP biosynthesis via de novo pathway; 5-formamido-1-(5-phospho-D-ribosyl)imidazole-4-carboxamide from 5-amino-1-(5-phospho-D-ribosyl)imidazole-4-carboxamide (10-formyl THF route): step 1/1. It functions in the pathway purine metabolism; IMP biosynthesis via de novo pathway; IMP from 5-formamido-1-(5-phospho-D-ribosyl)imidazole-4-carboxamide: step 1/1. The polypeptide is Bifunctional purine biosynthesis protein PurH (Aeromonas salmonicida (strain A449)).